The sequence spans 734 residues: Ribosomal RNA large subunit methyltransferase K/L (734 aa).

In terms of domain architecture, THUMP spans 43–154 (VGYRSCLWSR…RNQLTLSLDL (112 aa)).

The protein belongs to the methyltransferase superfamily. RlmKL family.

The protein resides in the cytoplasm. The enzyme catalyses guanosine(2445) in 23S rRNA + S-adenosyl-L-methionine = N(2)-methylguanosine(2445) in 23S rRNA + S-adenosyl-L-homocysteine + H(+). It carries out the reaction guanosine(2069) in 23S rRNA + S-adenosyl-L-methionine = N(2)-methylguanosine(2069) in 23S rRNA + S-adenosyl-L-homocysteine + H(+). Its function is as follows. Specifically methylates the guanine in position 2445 (m2G2445) and the guanine in position 2069 (m7G2069) of 23S rRNA. The sequence is that of Ribosomal RNA large subunit methyltransferase K/L from Hydrogenovibrio crunogenus (strain DSM 25203 / XCL-2) (Thiomicrospira crunogena).